Here is a 142-residue protein sequence, read N- to C-terminus: Hemoglobin subunit alpha-1 (142 aa).

N-acetylserine is present on Ser1. Residues 1–142 form the Globin domain; it reads SLSVKDKAAV…VALALAERYR (142 aa). Residue His59 participates in O2 binding. Position 88 (His88) interacts with heme b.

The protein belongs to the globin family. As to quaternary structure, hb 1 is a heterotetramer of two alpha-1 and two beta-1 chains. Red blood cells.

Involved in oxygen transport from gills to the various peripheral tissues. This chain is Hemoglobin subunit alpha-1 (hba1), found in Gobionotothen gibberifrons (Humped rockcod).